The chain runs to 166 residues: Phospholipase A2 inhibitor clone 05 (166 aa).

Positions 1–19 are cleaved as a signal peptide; that stretch reads MRLILLSSLLLLGIFLADG. The region spanning 46-161 is the C-type lectin domain; that stretch reads LKGAFLTVHR…CDDNLLVVCE (116 aa). 2 disulfide bridges follow: C83–C160 and C138–C152. The N-linked (GlcNAc...) asparagine glycan is linked to N122.

It belongs to the alpha-type phospholipase A2 inhibitor family. In terms of assembly, homotrimer; non-covalently linked. As to expression, expressed by the liver.

Its subcellular location is the secreted. Functionally, this phospholipase A2 inhibitor binds directly phospholipase A2 in the presence or absence of calcium. The chain is Phospholipase A2 inhibitor clone 05 from Bothrops moojeni (Lance-headed viper).